We begin with the raw amino-acid sequence, 146 residues long: Large ribosomal subunit protein uL15 (146 aa).

Basic and acidic residues predominate over residues 1–13 (MKLNELKPNEGSR). Residues 1–54 (MKLNELKPNEGSRRNRKRVGRGTSSGYGKTAGRGQKGQLARTGGKTRLGFEGGQ) form a disordered region. A compositionally biased stretch (gly residues) spans 23 to 35 (TSSGYGKTAGRGQ).

The protein belongs to the universal ribosomal protein uL15 family. As to quaternary structure, part of the 50S ribosomal subunit.

Binds to the 23S rRNA. This Lactobacillus johnsonii (strain CNCM I-12250 / La1 / NCC 533) protein is Large ribosomal subunit protein uL15.